Here is a 91-residue protein sequence, read N- to C-terminus: MVIVFVVSFLCIEEMRTLSISSRTFPRIEASIPFKADVISWMGIFLFWMSIVSHSGISICSCMGGVESLPFLISKERCNSTKKLNCRLVWP.

This is an uncharacterized protein from Archaeoglobus fulgidus (strain ATCC 49558 / DSM 4304 / JCM 9628 / NBRC 100126 / VC-16).